Consider the following 156-residue polypeptide: Arginine repressor (156 aa).

Belongs to the ArgR family.

It localises to the cytoplasm. The protein operates within amino-acid biosynthesis; L-arginine biosynthesis [regulation]. Regulates arginine biosynthesis genes. The protein is Arginine repressor of Salmonella agona (strain SL483).